A 328-amino-acid chain; its full sequence is GMP reductase (328 aa).

The active-site Thioimidate intermediate is C176. 205–228 (IIADGGIRTHGDVAKSIRFGATMV) contacts NADP(+).

This sequence belongs to the IMPDH/GMPR family. GuaC type 2 subfamily.

The catalysed reaction is IMP + NH4(+) + NADP(+) = GMP + NADPH + 2 H(+). Functionally, catalyzes the irreversible NADPH-dependent deamination of GMP to IMP. It functions in the conversion of nucleobase, nucleoside and nucleotide derivatives of G to A nucleotides, and in maintaining the intracellular balance of A and G nucleotides. This Bacillus cereus (strain ATCC 14579 / DSM 31 / CCUG 7414 / JCM 2152 / NBRC 15305 / NCIMB 9373 / NCTC 2599 / NRRL B-3711) protein is GMP reductase.